Here is a 281-residue protein sequence, read N- to C-terminus: Probable endonuclease 4 (281 aa).

Residues His-69, His-109, Glu-145, Asp-179, His-182, His-216, Asp-229, His-231, and Glu-261 each coordinate Zn(2+).

Belongs to the AP endonuclease 2 family. The cofactor is Zn(2+).

It catalyses the reaction Endonucleolytic cleavage to 5'-phosphooligonucleotide end-products.. Functionally, endonuclease IV plays a role in DNA repair. It cleaves phosphodiester bonds at apurinic or apyrimidinic (AP) sites, generating a 3'-hydroxyl group and a 5'-terminal sugar phosphate. This chain is Probable endonuclease 4, found in Aeromonas salmonicida (strain A449).